The chain runs to 492 residues: RNA-binding protein Nova-2 (492 aa).

A Bipartite nuclear localization signal motif is present at residues 10-26; the sequence is KRPLETPPEVVCTKRSN. A KH 1 domain is found at 32 to 99; it reads EYFLKVLIPS…EALNAVHSFI (68 aa). Lysine 112 is covalently cross-linked (Glycyl lysine isopeptide (Lys-Gly) (interchain with G-Cter in SUMO2)). KH domains are found at residues 130-196 and 406-473; these read AKQA…VSAI and KELV…QYLI.

As to quaternary structure, interacts with PTBP2; the interaction is direct. As to expression, brain. Expression restricted to astrocytes.

It is found in the nucleus. In terms of biological role, functions to regulate alternative splicing in neurons by binding pre-mRNA in a sequence-specific manner to activate exon inclusion or exclusion. It binds specifically to the sequences 5'-YCAY-3' and regulates splicing in only a subset of regulated exons. Binding to an exonic 5'-YCAY-3' cluster changes the protein complexes assembled on pre-mRNA, blocking U1 snRNP binding and exon inclusion, whereas binding to an intronic 5'-YCAY-3' cluster enhances spliceosome assembly and exon inclusion. With NOVA1, they perform unique biological functions in different brain areas and cell types. Uniquely regulates alternative splicing events of a series of axon guidance related genes during cortical development, being essential for central nervous system development by regulating neural networks wiring. Regulates differentially alternative splicing on the same transcripts expressed in different neurons. This includes functional differences in transcripts expressed in cortical and cerebellar excitatory versus inhibitory neurons where is required for, respectively, development of laminar structure and motor coordination and synapse formation. Also the regulation the regulation of intron retention can sequester the trans-acting splicing factor PTBP2, acting as a variable cis-acting scaffolding platform for PTBP2 across various natural conditions. This is RNA-binding protein Nova-2 from Homo sapiens (Human).